The chain runs to 426 residues: Probable M18 family aminopeptidase 2 (426 aa).

Residues histidine 79, histidine 156, and histidine 399 each contribute to the Zn(2+) site.

The protein belongs to the peptidase M18 family. Requires Zn(2+) as cofactor.

This is Probable M18 family aminopeptidase 2 (apeB) from Mycobacterium leprae (strain TN).